A 101-amino-acid chain; its full sequence is Small ribosomal subunit protein bS18c (101 aa).

This sequence belongs to the bacterial ribosomal protein bS18 family. Part of the 30S ribosomal subunit.

It is found in the plastid. The protein resides in the chloroplast. This Gossypium barbadense (Sea Island cotton) protein is Small ribosomal subunit protein bS18c.